Here is a 148-residue protein sequence, read N- to C-terminus: Putative anti-anti-sigma factor Rv2638 (148 aa).

Residues 30–141 enclose the STAS domain; it reads LRATTDGSGA…PTVDTALGKG (112 aa).

This sequence belongs to the anti-sigma-factor antagonist family. As to quaternary structure, interacts with unphosphorylated OprA.

This Mycobacterium tuberculosis (strain ATCC 25618 / H37Rv) protein is Putative anti-anti-sigma factor Rv2638.